The chain runs to 618 residues: 1-deoxy-D-xylulose-5-phosphate synthase (618 aa).

Residues His70 and 111-113 contribute to the thiamine diphosphate site; that span reads GHS. Asp142 provides a ligand contact to Mg(2+). Thiamine diphosphate contacts are provided by residues 143–144, Asn171, Tyr278, and Glu360; that span reads GS. Asn171 provides a ligand contact to Mg(2+).

It belongs to the transketolase family. DXPS subfamily. As to quaternary structure, homodimer. It depends on Mg(2+) as a cofactor. Thiamine diphosphate is required as a cofactor.

The enzyme catalyses D-glyceraldehyde 3-phosphate + pyruvate + H(+) = 1-deoxy-D-xylulose 5-phosphate + CO2. The protein operates within metabolic intermediate biosynthesis; 1-deoxy-D-xylulose 5-phosphate biosynthesis; 1-deoxy-D-xylulose 5-phosphate from D-glyceraldehyde 3-phosphate and pyruvate: step 1/1. In terms of biological role, catalyzes the acyloin condensation reaction between C atoms 2 and 3 of pyruvate and glyceraldehyde 3-phosphate to yield 1-deoxy-D-xylulose-5-phosphate (DXP). The chain is 1-deoxy-D-xylulose-5-phosphate synthase from Helicobacter pylori (strain ATCC 700392 / 26695) (Campylobacter pylori).